The primary structure comprises 311 residues: Porphobilinogen deaminase (311 aa).

Cys-241 carries the post-translational modification S-(dipyrrolylmethanemethyl)cysteine.

This sequence belongs to the HMBS family. As to quaternary structure, monomer. Dipyrromethane serves as cofactor.

The catalysed reaction is 4 porphobilinogen + H2O = hydroxymethylbilane + 4 NH4(+). Its pathway is porphyrin-containing compound metabolism; protoporphyrin-IX biosynthesis; coproporphyrinogen-III from 5-aminolevulinate: step 2/4. In terms of biological role, tetrapolymerization of the monopyrrole PBG into the hydroxymethylbilane pre-uroporphyrinogen in several discrete steps. The chain is Porphobilinogen deaminase from Shouchella clausii (strain KSM-K16) (Alkalihalobacillus clausii).